The following is a 346-amino-acid chain: N-acetyl-gamma-glutamyl-phosphate reductase (346 aa).

C149 is a catalytic residue.

Belongs to the NAGSA dehydrogenase family. Type 1 subfamily.

It is found in the cytoplasm. The catalysed reaction is N-acetyl-L-glutamate 5-semialdehyde + phosphate + NADP(+) = N-acetyl-L-glutamyl 5-phosphate + NADPH + H(+). It participates in amino-acid biosynthesis; L-arginine biosynthesis; N(2)-acetyl-L-ornithine from L-glutamate: step 3/4. Functionally, catalyzes the NADPH-dependent reduction of N-acetyl-5-glutamyl phosphate to yield N-acetyl-L-glutamate 5-semialdehyde. In Oceanobacillus iheyensis (strain DSM 14371 / CIP 107618 / JCM 11309 / KCTC 3954 / HTE831), this protein is N-acetyl-gamma-glutamyl-phosphate reductase.